A 374-amino-acid chain; its full sequence is Alcohol dehydrogenase class-3 (374 aa).

An N-acetylalanine modification is found at alanine 2. Residues cysteine 45, histidine 67, cysteine 97, cysteine 100, cysteine 103, cysteine 111, and cysteine 174 each coordinate Zn(2+). An N6-succinyllysine modification is found at lysine 233. Position 247 is a phosphoserine (serine 247). At lysine 315 the chain carries N6-succinyllysine. Phosphoserine occurs at positions 324 and 351.

It belongs to the zinc-containing alcohol dehydrogenase family. Class-III subfamily. Homodimer. Requires Zn(2+) as cofactor. In terms of tissue distribution, ubiquitous.

It is found in the cytoplasm. The enzyme catalyses a primary alcohol + NAD(+) = an aldehyde + NADH + H(+). It carries out the reaction a secondary alcohol + NAD(+) = a ketone + NADH + H(+). The catalysed reaction is S-(hydroxymethyl)glutathione + NADP(+) = S-formylglutathione + NADPH + H(+). It catalyses the reaction S-(hydroxymethyl)glutathione + NAD(+) = S-formylglutathione + NADH + H(+). The enzyme catalyses 20-oxo-(5Z,8Z,11Z,14Z)-eicosatetraenoate + NAD(+) + H2O = (5Z,8Z,11Z,14Z)-eicosatetraenedioate + NADH + 2 H(+). It carries out the reaction 20-hydroxy-(5Z,8Z,11Z,14Z)-eicosatetraenoate + NAD(+) = 20-oxo-(5Z,8Z,11Z,14Z)-eicosatetraenoate + NADH + H(+). The catalysed reaction is S-nitrosoglutathione + NADH + H(+) = S-(hydroxysulfenamide)glutathione + NAD(+). In terms of biological role, catalyzes the oxidation of long-chain primary alcohols and the oxidation of S-(hydroxymethyl) glutathione. Also oxidizes long chain omega-hydroxy fatty acids, such as 20-HETE, producing both the intermediate aldehyde, 20-oxoarachidonate and the end product, a dicarboxylic acid, (5Z,8Z,11Z,14Z)-eicosatetraenedioate. Class-III ADH is remarkably ineffective in oxidizing ethanol. Required for clearance of cellular formaldehyde, a cytotoxic and carcinogenic metabolite that induces DNA damage. Also acts as a S-nitroso-glutathione reductase by catalyzing the NADH-dependent reduction of S-nitrosoglutathione, thereby regulating protein S-nitrosylation. The protein is Alcohol dehydrogenase class-3 of Mus musculus (Mouse).